A 230-amino-acid chain; its full sequence is Phosphoribosylformylglycinamidine synthase subunit PurQ (230 aa).

One can recognise a Glutamine amidotransferase type-1 domain in the interval 2–230; the sequence is KIAVTKFLGT…KGMIDYAKRI (229 aa). The Nucleophile role is filled by Cys85. Residues His202 and Glu204 contribute to the active site.

As to quaternary structure, part of the FGAM synthase complex composed of 1 PurL, 1 PurQ and 2 PurS subunits.

It is found in the cytoplasm. It catalyses the reaction N(2)-formyl-N(1)-(5-phospho-beta-D-ribosyl)glycinamide + L-glutamine + ATP + H2O = 2-formamido-N(1)-(5-O-phospho-beta-D-ribosyl)acetamidine + L-glutamate + ADP + phosphate + H(+). The enzyme catalyses L-glutamine + H2O = L-glutamate + NH4(+). It participates in purine metabolism; IMP biosynthesis via de novo pathway; 5-amino-1-(5-phospho-D-ribosyl)imidazole from N(2)-formyl-N(1)-(5-phospho-D-ribosyl)glycinamide: step 1/2. In terms of biological role, part of the phosphoribosylformylglycinamidine synthase complex involved in the purines biosynthetic pathway. Catalyzes the ATP-dependent conversion of formylglycinamide ribonucleotide (FGAR) and glutamine to yield formylglycinamidine ribonucleotide (FGAM) and glutamate. The FGAM synthase complex is composed of three subunits. PurQ produces an ammonia molecule by converting glutamine to glutamate. PurL transfers the ammonia molecule to FGAR to form FGAM in an ATP-dependent manner. PurS interacts with PurQ and PurL and is thought to assist in the transfer of the ammonia molecule from PurQ to PurL. The polypeptide is Phosphoribosylformylglycinamidine synthase subunit PurQ (Methanocaldococcus jannaschii (strain ATCC 43067 / DSM 2661 / JAL-1 / JCM 10045 / NBRC 100440) (Methanococcus jannaschii)).